The chain runs to 347 residues: Adenine deaminase (347 aa).

The Zn(2+) site is built by histidine 16, histidine 18, and histidine 204. Glutamate 207 acts as the Proton donor in catalysis. A Zn(2+)-binding site is contributed by aspartate 285. Aspartate 286 serves as a coordination point for substrate.

It belongs to the metallo-dependent hydrolases superfamily. Adenosine and AMP deaminases family. Adenine deaminase type 2 subfamily. Zn(2+) is required as a cofactor. Post-translationally, probably ubiquitinated when cells enter quiescence in response to nutrient limitation, since it is specifically degraded via a process requiring the F-box protein SAF1 and components of the SKP1-Cullin-F-box complex.

The protein localises to the cytoplasm. It localises to the nucleus. The enzyme catalyses adenine + H2O + H(+) = hypoxanthine + NH4(+). In terms of biological role, catalyzes the hydrolytic deamination of adenine to hypoxanthine. Plays an important role in the purine salvage pathway and in nitrogen catabolism. Also exhibits a low activity towards N(6)-substituted adenines that are commonly known as the plant hormones cytokinins. In Saccharomyces cerevisiae (strain ATCC 204508 / S288c) (Baker's yeast), this protein is Adenine deaminase.